Reading from the N-terminus, the 1033-residue chain is Tyrosine-protein kinase-like otk (1033 aa).

The N-terminal stretch at 1 to 22 is a signal peptide; sequence MTARMISICGLVMALMMASVLA. The Extracellular segment spans residues 23–581; it reads SSSRFQRVPQ…GGDGFLVTRA (559 aa). 5 Ig-like C2-type domains span residues 25-114, 113-199, 251-365, 368-463, and 468-558; these read SRFQ…AKLS, LSVI…RVMS, PEDL…APIN, PGIL…VAIN, and PKFS…VQLV. N-linked (GlcNAc...) asparagine glycosylation occurs at Asn-39. 4 disulfide bridges follow: Cys-46–Cys-95, Cys-137–Cys-188, Cys-276–Cys-354, and Cys-399–Cys-447. Residues Asn-336, Asn-417, Asn-429, Asn-444, Asn-457, Asn-512, and Asn-524 are each glycosylated (N-linked (GlcNAc...) asparagine). The cysteines at positions 490 and 542 are disulfide-linked. Residues 582–602 traverse the membrane as a helical segment; sequence VLITMTVALAYIVLVVGLMLW. At 603 to 1033 the chain is on the cytoplasmic side; it reads CRYRRQARKA…LSKAMQSAEK (431 aa). 2 disordered regions span residues 617 to 679 and 718 to 760; these read LSTK…KKSA and SPSD…KTSM. A compositionally biased stretch (polar residues) spans 655 to 673; the sequence is KSSGDAQKSDDTACSQQSR. At Ser-678 the chain carries Phosphoserine. A Protein kinase; inactive domain is found at 692 to 1028; it reads LSELIQIGRG…QLGAALSKAM (337 aa). Basic and acidic residues predominate over residues 720-731; the sequence is SDKDADTEKQHS.

The protein belongs to the protein kinase superfamily. Tyr protein kinase family. Insulin receptor subfamily. As to quaternary structure, interacts with plexA; component of a receptor complex that mediates the repulsive signaling in response to Semaphorin ligands. Dynamically expressed during embryogenesis in several areas of the developing nervous system, including neurons and fasciculating axons. Expression in stage 7 embryos is seen in the anterior midgut primordia, cephalic furrow and along the germinal band. At stage 11, expression is in 15 stripes over the trunk region, and in the anterior and posterior midgut primordia. Stage 12 shows expression in the developing nervous system, procephalic lobe and maxillar bud. Stage 13 shows expression in the ventral cord, maxillar segment and in three regions of the gut. At stage 16 expression is preferentially detected throughout the nervous system, including the neuromers in the ventral cord and the supraesophageal ganglion (at protein level). In larva, expression is seen in developing R cells and is localized predominantly to R1-R6 growth cones.

Its subcellular location is the cell membrane. Functionally, acts as a calcium-dependent, homophilic cell adhesion molecule that regulates neural recognition during the development of the nervous system. Component of the repulsive Plexin signaling response to regulate motor axon guidance at the embryonic stage. Also component of a receptor complex that is required in the adult visual system to innervate the lamina layer; specific targeting of R1-R6 axons. The chain is Tyrosine-protein kinase-like otk from Drosophila melanogaster (Fruit fly).